Reading from the N-terminus, the 348-residue chain is D-alanine--D-alanine ligase (348 aa).

Positions 132–334 (KRILEVAGVP…YSDIIKELVV (203 aa)) constitute an ATP-grasp domain. Position 162 to 217 (162 to 217 (LEKLTFPVFVKPANMGSSVGISKAENESELRSAIDLALKYDSRILIEQGVVAREIE)) interacts with ATP. Residues D288, E301, and N303 each coordinate Mg(2+).

Belongs to the D-alanine--D-alanine ligase family. Mg(2+) serves as cofactor. The cofactor is Mn(2+).

It is found in the cytoplasm. It catalyses the reaction 2 D-alanine + ATP = D-alanyl-D-alanine + ADP + phosphate + H(+). It functions in the pathway cell wall biogenesis; peptidoglycan biosynthesis. Functionally, cell wall formation. The polypeptide is D-alanine--D-alanine ligase (Streptococcus thermophilus (strain CNRZ 1066)).